The sequence spans 443 residues: Ribosomal protein uS12 methylthiotransferase RimO (443 aa).

An MTTase N-terminal domain is found at 8–118; that stretch reads PKVGFVSLGC…VVNAVHEVVP (111 aa). 6 residues coordinate [4Fe-4S] cluster: Cys17, Cys53, Cys82, Cys151, Cys155, and Cys158. Positions 137–375 constitute a Radical SAM core domain; it reads LTPRHYAYLK…MAHQQAISTA (239 aa). Residues 378–443 enclose the TRAM domain; that stretch reads QLRIGKEIEV…DEYDMWAEPI (66 aa).

Belongs to the methylthiotransferase family. RimO subfamily. Requires [4Fe-4S] cluster as cofactor.

It is found in the cytoplasm. The catalysed reaction is L-aspartate(89)-[ribosomal protein uS12]-hydrogen + (sulfur carrier)-SH + AH2 + 2 S-adenosyl-L-methionine = 3-methylsulfanyl-L-aspartate(89)-[ribosomal protein uS12]-hydrogen + (sulfur carrier)-H + 5'-deoxyadenosine + L-methionine + A + S-adenosyl-L-homocysteine + 2 H(+). Its function is as follows. Catalyzes the methylthiolation of an aspartic acid residue of ribosomal protein uS12. This Pseudomonas putida (strain GB-1) protein is Ribosomal protein uS12 methylthiotransferase RimO.